A 165-amino-acid polypeptide reads, in one-letter code: Putative glycine-rich cell wall structural protein 1 (165 aa).

The first 23 residues, 1-23 (MARKVIALAFLLLLTISLSKSNA), serve as a signal peptide directing secretion. 2 R2; Tyr-rich repeats span residues 56-62 (GYGYGYG) and 93-99 (GYGYGYG). The interval 105 to 125 (AQGQGSGGGGGGGGGGGGGGS) is disordered. The R2; Tyr-rich repeat unit spans residues 132–138 (GYGYGYG). Residues 146–165 (GGGGGGGGGGGGSGYVGKHE) form a disordered region.

It is found in the secreted. The protein localises to the cell wall. Responsible for plasticity of the cell wall. In Oryza sativa subsp. indica (Rice), this protein is Putative glycine-rich cell wall structural protein 1 (GRP-1).